Consider the following 119-residue polypeptide: MARSVAVVFLMLLSVVCLDAIQRPPQVQVYTRHPPEDGKTNFLNCYVSQFHPPQIEIELLKNGKKMDKVELSDLSFNKDWSFYLLAHTEFTPTATDKYACRVTHTTLKEPKVVTWERDM.

A signal peptide spans 1 to 20 (MARSVAVVFLMLLSVVCLDA). One can recognise an Ig-like C1-type domain in the interval 25 to 114 (PQVQVYTRHP…TTLKEPKVVT (90 aa)). C45 and C100 form a disulfide bridge.

Belongs to the beta-2-microglobulin family. In terms of assembly, heterodimer of an alpha chain and a beta chain. Beta-2-microglobulin is the beta-chain of major histocompatibility complex class I molecules.

It is found in the secreted. Its function is as follows. Component of the class I major histocompatibility complex (MHC). Involved in the presentation of peptide antigens to the immune system. This chain is Beta-2-microglobulin (B2M), found in Cricetulus griseus (Chinese hamster).